Here is a 506-residue protein sequence, read N- to C-terminus: Galactose/methyl galactoside import ATP-binding protein MglA (506 aa).

2 consecutive ABC transporter domains span residues 14–249 and 264–506; these read LEMS…VGRS and VILE…SLHL. Position 46–53 (46–53) interacts with ATP; the sequence is GENGAGKS.

The protein belongs to the ABC transporter superfamily. Galactose/methyl galactoside importer (TC 3.A.1.2.3) family. As to quaternary structure, the complex is composed of one ATP-binding protein (MglA), two transmembrane proteins (MglC) and a solute-binding protein (MglB).

The protein localises to the cell inner membrane. The enzyme catalyses D-galactose(out) + ATP + H2O = D-galactose(in) + ADP + phosphate + H(+). It catalyses the reaction methyl beta-D-galactoside(out) + ATP + H2O = methyl beta-D-galactoside(in) + ADP + phosphate + H(+). In terms of biological role, part of the ABC transporter complex MglABC involved in galactose/methyl galactoside import. Responsible for energy coupling to the transport system. The protein is Galactose/methyl galactoside import ATP-binding protein MglA of Escherichia coli O157:H7.